A 735-amino-acid chain; its full sequence is Ion-translocating oxidoreductase complex subunit C (735 aa).

2 4Fe-4S ferredoxin-type domains span residues 368–397 (MGAP…QQLY) and 407–436 (KATA…VQYF). Residues Cys-377, Cys-380, Cys-383, Cys-387, Cys-416, Cys-419, Cys-422, and Cys-426 each coordinate [4Fe-4S] cluster. The interval 562–713 (AIARAKARKQ…AEPADPRKAA (152 aa)) is disordered.

It belongs to the 4Fe4S bacterial-type ferredoxin family. RnfC subfamily. As to quaternary structure, the complex is composed of six subunits: RsxA, RsxB, RsxC, RsxD, RsxE and RsxG. It depends on [4Fe-4S] cluster as a cofactor.

It localises to the cell inner membrane. Functionally, part of a membrane-bound complex that couples electron transfer with translocation of ions across the membrane. Required to maintain the reduced state of SoxR. The protein is Ion-translocating oxidoreductase complex subunit C of Salmonella newport (strain SL254).